Consider the following 1139-residue polypeptide: Protein kinase C-like (1139 aa).

In terms of domain architecture, REM-1 1 spans 1 to 67 (MNEDEAIQNI…LRDIQLRKVG (67 aa)). A disordered region spans residues 72–132 (GMSLGADDAG…PGPGAASKAR (61 aa)). The REM-1 2 domain occupies 142–219 (KYDTPYLGPR…LKRYEELHVD (78 aa)). The region spanning 225-343 (AQDDDSINTP…MRRKRIEAEM (119 aa)) is the C2 domain. The segment at 349 to 404 (VSADRMGSTGAPSQFPMSPTSGSFGGSPQAPGGGQGQAPGPFGDPAPQPQVVTGPI) is disordered. Over residues 358-368 (GAPSQFPMSPT) the composition is skewed to polar residues. 2 consecutive Phorbol-ester/DAG-type zinc fingers follow at residues 454–502 (GHKF…VTKC) and 522–572 (PHRF…PDFC). Disordered stretches follow at residues 590 to 637 (KQRQ…TPSA), 649 to 668 (QTSP…LSAA), and 679 to 804 (QGRT…TDPG). Over residues 594-614 (QKTTSLSEKTLRSGATKSPTT) the composition is skewed to polar residues. Positions 615-629 (AGHGSSASFSSAGAG) are enriched in low complexity. Composition is skewed to pro residues over residues 723-734 (AQPPAQQRPPQP) and 743-760 (AQMP…PPQP). Positions 761–793 (GQQYQQQQPAAQKPQPQPPATAQGAAAGPPGSQ) are enriched in low complexity. One can recognise a Protein kinase domain in the interval 814–1073 (FNFLAVLGKG…AQEVMSQPFF (260 aa)). ATP is bound by residues 820 to 828 (LGKGNFGKV) and K843. The active-site Proton acceptor is D939. Residues 1074-1139 (RNINWDDIYH…RGFSYTADLD (66 aa)) enclose the AGC-kinase C-terminal domain.

Belongs to the protein kinase superfamily. AGC Ser/Thr protein kinase family. PKC subfamily.

It catalyses the reaction L-seryl-[protein] + ATP = O-phospho-L-seryl-[protein] + ADP + H(+). The enzyme catalyses L-threonyl-[protein] + ATP = O-phospho-L-threonyl-[protein] + ADP + H(+). Its activity is regulated as follows. Stimulated about twofold by phospholipids or phorbol esters. This chain is Protein kinase C-like (pkc1), found in Hypocrea jecorina (Trichoderma reesei).